The sequence spans 220 residues: Translin-1 (220 aa).

This sequence belongs to the translin family. In terms of assembly, forms an octameric ring-shaped structure, which is capable of binding DNA or RNA.

It localises to the cytoplasm. The protein localises to the nucleus. Functionally, DNA-binding protein that specifically recognizes consensus sequences at the breakpoint junctions in chromosomal translocations. Selectively binds single-stranded d(GT)n and d(GTT)n microsatellite repeats. Has much higher affinities for the homologous RNA sequences (GU)n and (GUU)n. Does not bind double-stranded DNA. Has a role in meiosis. This chain is Translin-1 (tsn1), found in Schizosaccharomyces pombe (strain 972 / ATCC 24843) (Fission yeast).